A 791-amino-acid polypeptide reads, in one-letter code: Cytochrome c oxidase polypeptide I+III (791 aa).

A COX1 region spans residues 1-473 (MAITAKPKAG…LLSTIGAYIL (473 aa)). The helical transmembrane segment at 29–49 (LMYTATAFFAFALAGVFSLLI) threads the bilayer. Histidine 73 lines the Fe(II)-heme a pocket. Transmembrane regions (helical) follow at residues 78-98 (LFFFIIQAGLTGFGNFVVPLM), 111-131 (AFSYWAFLGAIVLALMSYFFP), 155-175 (FYLAAILLLGFSSLLGNANFV), 201-221 (ASVLNLFSLAGLTAATLLVLL), 244-264 (FFWFYSHPTVYVMLLPYLGIL), 282-302 (MVWAQMGIVVLGTMVWAHHMF), 312-332 (IAFAFFTALIAVPTGVKLFNI), 347-367 (LYWVLGFIFNFLLGGITGVML), 381-401 (FVVAHFHNVLMAGSGFGAFAG), 423-443 (FWLFLVGYLLTFLPQYALGYL), 464-484 (LLSTIGAYILGLGGLVWIYTM), 566-586 (FAFFVAVAALPVPNVWMWVFL), 617-637 (AWMGMAWFIVSEVGLFAILIA), 657-677 (LWLALLNTFLLVSSSFTVHFA), 691-711 (FGLLVTIILGVLFFLVQSWEF), 729-749 (FFTIVGLHGLHVVIGGFGLIL), and 771-791 (SMYWHLVDAVWLVIVTIFYVW). Histidine 250, tyrosine 254, histidine 299, and histidine 300 together coordinate Cu cation. Positions 250 to 254 (HPTVY) form a cross-link, 1'-histidyl-3'-tyrosine (His-Tyr). Histidine 385 contributes to the heme a3 binding site. Residue histidine 387 participates in Fe(II)-heme a binding. The segment at 545-791 (DPAHIHLPNS…LVIVTIFYVW (247 aa)) is COX3.

The protein in the N-terminal section; belongs to the heme-copper respiratory oxidase family. This sequence in the C-terminal section; belongs to the cytochrome c oxidase subunit 3 family. As to quaternary structure, possibly a heterodimer of A-protein (contains: cytochrome c oxidase subunits I and III) and subunit II. The A-protein could also present a precursor form of subunits I and III. Cu(2+) is required as a cofactor. It depends on heme as a cofactor.

The protein localises to the cell membrane. The enzyme catalyses 4 Fe(II)-[cytochrome c] + O2 + 8 H(+)(in) = 4 Fe(III)-[cytochrome c] + 2 H2O + 4 H(+)(out). It functions in the pathway energy metabolism; oxidative phosphorylation. In terms of biological role, cytochrome c oxidase is the component of the respiratory chain that catalyzes the reduction of oxygen to water. Subunits 1-3 form the functional core of the enzyme complex. Co I is the catalytic subunit of the enzyme. Electrons originating in cytochrome c are transferred via the copper A center of subunit 2 and heme a of subunit 1 to the bimetallic center formed by heme a3 and copper B. This cytochrome c oxidase shows proton pump activity across the membrane in addition to the electron transfer. The protein is Cytochrome c oxidase polypeptide I+III (caaA) of Thermus thermophilus (strain ATCC 27634 / DSM 579 / HB8).